The following is an 809-amino-acid chain: Zygotic DNA replication licensing factor mcm3 (809 aa).

The 208-residue stretch at 297-504 folds into the MCM domain; that stretch reads IFEQLSRSLA…QDREISDHVL (208 aa). 347-354 is a binding site for ATP; that stretch reads GDPSVAKS. The Arginine finger motif lies at 479–482; the sequence is SRFD. A disordered region spans residues 664–741; that stretch reads KKRRRRDEDS…TDSSAKPGLS (78 aa). Residues 696–705 show a composition bias toward basic and acidic residues; the sequence is AQEGESHDPY.

Belongs to the MCM family. As to quaternary structure, component of the mcm2-7 complex (RLF-M). The complex forms a toroidal hexameric ring with the proposed subunit order mcm2-mcm6-mcm4-mcm7-mcm3-mcm5. Component of the CMG helicase complex, composed of the mcm2-7 complex, the GINS complex and cdc45.

It is found in the nucleus. It localises to the chromosome. The catalysed reaction is ATP + H2O = ADP + phosphate + H(+). Functionally, acts as a component of the MCM2-7 complex (MCM complex) which is the putative replicative helicase essential for 'once per cell cycle' DNA replication initiation and elongation in eukaryotic cells. The active ATPase sites in the MCM2-7 ring are formed through the interaction surfaces of two neighboring subunits such that a critical structure of a conserved arginine finger motif is provided in trans relative to the ATP-binding site of the Walker A box of the adjacent subunit. The six ATPase active sites, however, are likely to contribute differentially to the complex helicase activity. The existence of maternal and zygotic forms of mcm3 and mcm6 suggests that specific forms of mcm2-7 complexes may be used during different stages of development. The sequence is that of Zygotic DNA replication licensing factor mcm3 (zmcm3) from Xenopus tropicalis (Western clawed frog).